We begin with the raw amino-acid sequence, 274 residues long: Phosphoribosylaminoimidazole-succinocarboxamide synthase (274 aa).

The protein belongs to the SAICAR synthetase family.

It catalyses the reaction 5-amino-1-(5-phospho-D-ribosyl)imidazole-4-carboxylate + L-aspartate + ATP = (2S)-2-[5-amino-1-(5-phospho-beta-D-ribosyl)imidazole-4-carboxamido]succinate + ADP + phosphate + 2 H(+). Its pathway is purine metabolism; IMP biosynthesis via de novo pathway; 5-amino-1-(5-phospho-D-ribosyl)imidazole-4-carboxamide from 5-amino-1-(5-phospho-D-ribosyl)imidazole-4-carboxylate: step 1/2. The polypeptide is Phosphoribosylaminoimidazole-succinocarboxamide synthase (Nitrosopumilus maritimus (strain SCM1)).